We begin with the raw amino-acid sequence, 103 residues long: MEFCPKCKSLMIYQGDKLVCRKCGYEKEADDSEELVIKVERNKEDVPVIEGENLKTLPTTKAICPACGHNEAFWWLRQLRAADESEVRFFRCTKCGKTWREYD.

8 residues coordinate Zn(2+): Cys-4, Cys-7, Cys-20, Cys-23, Cys-64, Cys-67, Cys-92, and Cys-95. A C4-type zinc finger spans residues 4 to 23 (CPKCKSLMIYQGDKLVCRKC). The segment at 60–100 (TKAICPACGHNEAFWWLRQLRAADESEVRFFRCTKCGKTWR) adopts a TFIIS-type zinc-finger fold.

The protein belongs to the archaeal RpoM/eukaryotic RPA12/RPB9/RPC11 RNA polymerase family.

In terms of biological role, induces RNA cleavage activity in the RNA polymerase. In its presence, the cleavage activity of the RNA polymerase truncates the RNA back to position +15 in a stepwise manner by releasing mainly dinucleotides from the 3'-end of the nascent RNA. The truncated RNAs are able to continue elongation. Involved in transcriptional proofreading and fidelity. Misincorporation of nucleotides during elongation of transcription leads to arrested elongation complexes which are rescued by TFS-promoted removal of a dinucleotide from the 3'-end. TFS is able to induce a cleavage resynthesis cycle in stalled elongation complexes (resulting from the next missing nucleotide or a reduced incorporation rate of a wrong nucleotide) preventing misincorporation and enabling proofreading in a post-incorporation manner. Pausing of elongation complexes is the main determinant of TFS-induced RNA cleavage. The polypeptide is Transcription factor S (Archaeoglobus fulgidus (strain ATCC 49558 / DSM 4304 / JCM 9628 / NBRC 100126 / VC-16)).